The sequence spans 626 residues: Methanol dehydrogenase [cytochrome c] subunit 1 (626 aa).

The signal sequence occupies residues 1–27; it reads MSRFVTSVSALAMLALAPAALSSGAYA. Cys-130 and Cys-131 are oxidised to a cystine. Positions 204 and 288 each coordinate Ca(2+). Asp-330 (proton acceptor) is an active-site residue. A disulfide bond links Cys-413 and Cys-442.

This sequence belongs to the bacterial PQQ dehydrogenase family. In terms of assembly, heterotetramer composed of 2 alpha and 2 beta subunits. The cofactor is pyrroloquinoline quinone. Ca(2+) is required as a cofactor.

It is found in the cell inner membrane. The catalysed reaction is 2 Fe(III)-[cytochrome cL] + a primary alcohol = 2 Fe(II)-[cytochrome cL] + an aldehyde + 2 H(+). In terms of biological role, catalyzes the oxidation of primary alcohols including methanol. The sequence is that of Methanol dehydrogenase [cytochrome c] subunit 1 (moxF) from Methylorubrum extorquens (strain ATCC 14718 / DSM 1338 / JCM 2805 / NCIMB 9133 / AM1) (Methylobacterium extorquens).